A 335-amino-acid chain; its full sequence is MVRRDRLRRMREWWVQVGLLAVPLLAAYLHIPPPQLSPALHSWKTSGKFFTYKGLRIFYQDSVGVVGSPEIVVLLHGFPTSSYDWYKIWEGLTLRFHRVIALDFLGFGFSDKPRPHQYSIFEQASIVESLLRHLGLQNRRINLLSHDYGDIVAQELLYRYKQNRSGRLTIKSLCLSNGGIFPETHRPLLLQKLLKDGGVLSPILTRLMNFFVFSRGLTPVFGPYTRPTESELWDMWAVIRNNDGNLVIDSLLQYINQRKKFRRRWVGALASVSIPIHFIYGPLDPINPYPEFLELYRKTLPRSTVSILDDHISHYPQLEDPMGFLNAYMGFINSF.

2 helical membrane-spanning segments follow: residues 13-33 (WWVQ…HIPP) and 63-83 (VGVV…TSSY). In terms of domain architecture, AB hydrolase-1 spans 71-310 (IVVLLHGFPT…PRSTVSILDD (240 aa)). The RVIALD motif lies at 98-103 (RVIALD). An N-linked (GlcNAc...) asparagine glycan is attached at Asn-163. The helical transmembrane segment at 266-286 (VGALASVSIPIHFIYGPLDPI) threads the bilayer.

Belongs to the AB hydrolase superfamily. As to expression, expressed in mesodermal tissues. Isoform 1 is exclusively expressed from the paternal allele in all fetal tissues and cell lines examined, whereas isoform 2 is preferentially expressed from the paternal allele in a tissue-type-specific manner.

Its subcellular location is the endoplasmic reticulum membrane. The polypeptide is Mesoderm-specific transcript protein (Mest) (Mus musculus (Mouse)).